We begin with the raw amino-acid sequence, 354 residues long: Ferrochelatase (354 aa).

Residues His-204 and Glu-306 each contribute to the Fe cation site.

The protein belongs to the ferrochelatase family.

The protein resides in the cytoplasm. The enzyme catalyses heme b + 2 H(+) = protoporphyrin IX + Fe(2+). It functions in the pathway porphyrin-containing compound metabolism; protoheme biosynthesis; protoheme from protoporphyrin-IX: step 1/1. In terms of biological role, catalyzes the ferrous insertion into protoporphyrin IX. The chain is Ferrochelatase from Coxiella burnetii (strain Dugway 5J108-111).